The following is a 386-amino-acid chain: Glutamate 5-kinase (386 aa).

Lysine 28 serves as a coordination point for ATP. Substrate-binding residues include serine 68, aspartate 155, and asparagine 167. 187 to 188 serves as a coordination point for ATP; that stretch reads TD. The PUA domain maps to 294 to 372; that stretch reads RGRLVLDDGA…EKIESILGYI (79 aa).

This sequence belongs to the glutamate 5-kinase family.

Its subcellular location is the cytoplasm. The catalysed reaction is L-glutamate + ATP = L-glutamyl 5-phosphate + ADP. It participates in amino-acid biosynthesis; L-proline biosynthesis; L-glutamate 5-semialdehyde from L-glutamate: step 1/2. Catalyzes the transfer of a phosphate group to glutamate to form L-glutamate 5-phosphate. In Hahella chejuensis (strain KCTC 2396), this protein is Glutamate 5-kinase.